The following is a 417-amino-acid chain: Serine hydroxymethyltransferase (417 aa).

(6S)-5,6,7,8-tetrahydrofolate contacts are provided by residues Leu121 and 125-127; that span reads GHL. Lys230 bears the N6-(pyridoxal phosphate)lysine mark. Residue 355–357 participates in (6S)-5,6,7,8-tetrahydrofolate binding; sequence SPF.

The protein belongs to the SHMT family. As to quaternary structure, homodimer. Pyridoxal 5'-phosphate serves as cofactor.

It localises to the cytoplasm. It catalyses the reaction (6R)-5,10-methylene-5,6,7,8-tetrahydrofolate + glycine + H2O = (6S)-5,6,7,8-tetrahydrofolate + L-serine. The protein operates within one-carbon metabolism; tetrahydrofolate interconversion. It participates in amino-acid biosynthesis; glycine biosynthesis; glycine from L-serine: step 1/1. Functionally, catalyzes the reversible interconversion of serine and glycine with tetrahydrofolate (THF) serving as the one-carbon carrier. This reaction serves as the major source of one-carbon groups required for the biosynthesis of purines, thymidylate, methionine, and other important biomolecules. Also exhibits THF-independent aldolase activity toward beta-hydroxyamino acids, producing glycine and aldehydes, via a retro-aldol mechanism. This is Serine hydroxymethyltransferase from Legionella pneumophila (strain Lens).